The chain runs to 421 residues: Glutamyl-tRNA reductase (421 aa).

Substrate is bound by residues T49–R52, S109, E114–Q116, and Q120. The active-site Nucleophile is the C50. G189–S194 is an NADP(+) binding site.

Belongs to the glutamyl-tRNA reductase family. In terms of assembly, homodimer.

The catalysed reaction is (S)-4-amino-5-oxopentanoate + tRNA(Glu) + NADP(+) = L-glutamyl-tRNA(Glu) + NADPH + H(+). It participates in porphyrin-containing compound metabolism; protoporphyrin-IX biosynthesis; 5-aminolevulinate from L-glutamyl-tRNA(Glu): step 1/2. In terms of biological role, catalyzes the NADPH-dependent reduction of glutamyl-tRNA(Glu) to glutamate 1-semialdehyde (GSA). The polypeptide is Glutamyl-tRNA reductase (Solibacter usitatus (strain Ellin6076)).